We begin with the raw amino-acid sequence, 324 residues long: Ribosomal RNA small subunit methyltransferase H (324 aa).

S-adenosyl-L-methionine is bound by residues 47-49 (GGH), Asp67, Leu96, Asp115, and Gln122.

The protein belongs to the methyltransferase superfamily. RsmH family.

It localises to the cytoplasm. It carries out the reaction cytidine(1402) in 16S rRNA + S-adenosyl-L-methionine = N(4)-methylcytidine(1402) in 16S rRNA + S-adenosyl-L-homocysteine + H(+). Functionally, specifically methylates the N4 position of cytidine in position 1402 (C1402) of 16S rRNA. The sequence is that of Ribosomal RNA small subunit methyltransferase H from Halorhodospira halophila (strain DSM 244 / SL1) (Ectothiorhodospira halophila (strain DSM 244 / SL1)).